The primary structure comprises 149 residues: UPF0208 membrane protein VFMJ11_0876 (149 aa).

Transmembrane regions (helical) follow at residues F41–N61 and A69–N89.

Belongs to the UPF0208 family.

It localises to the cell inner membrane. This Aliivibrio fischeri (strain MJ11) (Vibrio fischeri) protein is UPF0208 membrane protein VFMJ11_0876.